A 648-amino-acid polypeptide reads, in one-letter code: ATP-dependent zinc metalloprotease FtsH 4 (648 aa).

Residues 1 to 6 (MKQSHK) are Cytoplasmic-facing. The chain crosses the membrane as a helical span at residues 7 to 27 (TLLLWVLLIMMFLAIWQFLSP). Residues 28-111 (DSRPATQVAF…VFFEKEDTSP (84 aa)) lie on the Periplasmic side of the membrane. The chain crosses the membrane as a helical span at residues 112–132 (FWPGAIMYLLPTVFLLVMFYL). The Cytoplasmic portion of the chain corresponds to 133–648 (FMRQLQAGGG…FGTPKPAPST (516 aa)). ATP is bound at residue 205–212 (GPPGTGKT). A Zn(2+)-binding site is contributed by histidine 427. Residue glutamate 428 is part of the active site. The Zn(2+) site is built by histidine 431 and aspartate 504. Residues 622–648 (YSDRDRAAKEKRRAASIFGTPKPAPST) are disordered.

In the central section; belongs to the AAA ATPase family. The protein in the C-terminal section; belongs to the peptidase M41 family. Homohexamer. Requires Zn(2+) as cofactor.

Its subcellular location is the cell inner membrane. In terms of biological role, acts as a processive, ATP-dependent zinc metallopeptidase for both cytoplasmic and membrane proteins. Plays a role in the quality control of integral membrane proteins. The protein is ATP-dependent zinc metalloprotease FtsH 4 of Sorangium cellulosum (strain So ce56) (Polyangium cellulosum (strain So ce56)).